Reading from the N-terminus, the 599-residue chain is Elongation factor 4 (599 aa).

One can recognise a tr-type G domain in the interval 2–184 (KNIRNFSIIA…RLVRDIPPPE (183 aa)). GTP is bound by residues 14–19 (DHGKST) and 131–134 (NKID).

The protein belongs to the TRAFAC class translation factor GTPase superfamily. Classic translation factor GTPase family. LepA subfamily.

The protein resides in the cell inner membrane. The catalysed reaction is GTP + H2O = GDP + phosphate + H(+). In terms of biological role, required for accurate and efficient protein synthesis under certain stress conditions. May act as a fidelity factor of the translation reaction, by catalyzing a one-codon backward translocation of tRNAs on improperly translocated ribosomes. Back-translocation proceeds from a post-translocation (POST) complex to a pre-translocation (PRE) complex, thus giving elongation factor G a second chance to translocate the tRNAs correctly. Binds to ribosomes in a GTP-dependent manner. This is Elongation factor 4 from Sodalis glossinidius (strain morsitans).